Consider the following 106-residue polypeptide: uncharacterized protein (106 aa).

It to the N-terminal of E.carotovora exoenzyme regulation regulon ORF1. The C-terminal part is colinear with YqcB. This sequence to E.coli YqcC.

This is an uncharacterized protein from Haemophilus influenzae (strain ATCC 51907 / DSM 11121 / KW20 / Rd).